A 156-amino-acid polypeptide reads, in one-letter code: Calmodulin (156 aa).

S2 carries the post-translational modification N-acetylserine. 4 consecutive EF-hand domains span residues 15-50, 51-86, 88-123, and 124-156; these read EQIA…LGQN, PTEA…KMKD, DSEE…LGEK, and LTDE…MTSK. Positions 28, 30, 32, 34, 39, 64, 66, 68, 70, 75, 101, 103, 105, and 112 each coordinate Ca(2+). K123 is subject to N6,N6,N6-trimethyllysine. Ca(2+) is bound by residues D137, D139, D141, Q143, and E148.

It belongs to the calmodulin family.

Functionally, calmodulin mediates the control of a large number of enzymes, ion channels and other proteins by Ca(2+). Among the enzymes to be stimulated by the calmodulin-Ca(2+) complex are a number of protein kinases and phosphatases. The chain is Calmodulin from Strongylocentrotus intermedius (Sea urchin).